The primary structure comprises 298 residues: Cyclin-dependent kinase 2 homolog (298 aa).

Residues tyrosine 4–phenylalanine 284 form the Protein kinase domain. ATP-binding positions include isoleucine 10–valine 18 and lysine 32. Threonine 14 is modified (phosphothreonine). A Phosphotyrosine modification is found at tyrosine 15. Aspartate 125 functions as the Proton acceptor in the catalytic mechanism. Threonine 158 is subject to Phosphothreonine.

This sequence belongs to the protein kinase superfamily. CMGC Ser/Thr protein kinase family. CDC2/CDKX subfamily. In terms of assembly, may form a complex composed of at least the catalytic subunit CRK2 and a cyclin. Mg(2+) serves as cofactor.

Its subcellular location is the cytoplasm. The enzyme catalyses L-seryl-[protein] + ATP = O-phospho-L-seryl-[protein] + ADP + H(+). It catalyses the reaction L-threonyl-[protein] + ATP = O-phospho-L-threonyl-[protein] + ADP + H(+). It carries out the reaction [DNA-directed RNA polymerase] + ATP = phospho-[DNA-directed RNA polymerase] + ADP + H(+). Its activity is regulated as follows. Phosphorylation at Thr-14 or Tyr-15 inactivates the enzyme, while phosphorylation at Thr-158 activates it. Its function is as follows. Serine/threonine-protein kinase. Involved in the control of the cell cycle. Required for entry into S-phase and mitosis. Probable component of the kinase complex that phosphorylates the repetitive C-terminus of RNA polymerase II. In Theileria annulata, this protein is Cyclin-dependent kinase 2 homolog.